Consider the following 745-residue polypeptide: Phosphoribosylformylglycinamidine synthase subunit PurL (745 aa).

The active site involves His47. ATP contacts are provided by Tyr50 and Lys90. Glu92 contacts Mg(2+). Substrate is bound by residues 93-96 (SHNH) and Arg115. His94 serves as the catalytic Proton acceptor. Asp116 contributes to the Mg(2+) binding site. Gln240 provides a ligand contact to substrate. Asp268 contributes to the Mg(2+) binding site. Residue 312–314 (ESQ) participates in substrate binding. Residues Asn501 and Gly538 each coordinate ATP. Asn539 serves as a coordination point for Mg(2+). Residue Ser541 coordinates substrate.

It belongs to the FGAMS family. In terms of assembly, monomer. Part of the FGAM synthase complex composed of 1 PurL, 1 PurQ and 2 PurS subunits.

The protein localises to the cytoplasm. It catalyses the reaction N(2)-formyl-N(1)-(5-phospho-beta-D-ribosyl)glycinamide + L-glutamine + ATP + H2O = 2-formamido-N(1)-(5-O-phospho-beta-D-ribosyl)acetamidine + L-glutamate + ADP + phosphate + H(+). The protein operates within purine metabolism; IMP biosynthesis via de novo pathway; 5-amino-1-(5-phospho-D-ribosyl)imidazole from N(2)-formyl-N(1)-(5-phospho-D-ribosyl)glycinamide: step 1/2. Its function is as follows. Part of the phosphoribosylformylglycinamidine synthase complex involved in the purines biosynthetic pathway. Catalyzes the ATP-dependent conversion of formylglycinamide ribonucleotide (FGAR) and glutamine to yield formylglycinamidine ribonucleotide (FGAM) and glutamate. The FGAM synthase complex is composed of three subunits. PurQ produces an ammonia molecule by converting glutamine to glutamate. PurL transfers the ammonia molecule to FGAR to form FGAM in an ATP-dependent manner. PurS interacts with PurQ and PurL and is thought to assist in the transfer of the ammonia molecule from PurQ to PurL. The protein is Phosphoribosylformylglycinamidine synthase subunit PurL of Leptospira interrogans serogroup Icterohaemorrhagiae serovar copenhageni (strain Fiocruz L1-130).